Here is a 370-residue protein sequence, read N- to C-terminus: MEWSTLTTIFDTSLAVVFTWVAYKTGQIIWKYTPYSYPNARIRAMEARLLTDQRFSELAESKSLQNFVVSLEDTDYGKRLTSLQSYNIEDVERALDLSLVDVIELMVKIMPKRIKGLFEIMLEEWDVRNIINVVKAKLSNMPPQDFIMPAGKMLQKVKAMAEAKTMEEMLVILEGTDYEEPLRRLLLNEITLQEFELELYKVHYSKLLRYVNSRKGEEKIIASEFVNMLIDYTNISTLLRAKLSSLAQEDIRKLIIPGGTLSKSTIEAMINSEDVVMALGELEGTKYGEVLREVREAVESGNIESVEIALRKYILRRMKELSQFYPLSVAVAVAYLLQKESEVRKLKAIAKLIEDGVKPEKIKEMVGELA.

Belongs to the V-ATPase V0D/AC39 subunit family. Has multiple subunits with at least A(3), B(3), C, D, E, F, H, I and proteolipid K(x).

It localises to the cell membrane. Component of the A-type ATP synthase that produces ATP from ADP in the presence of a proton gradient across the membrane. This Pyrococcus abyssi (strain GE5 / Orsay) protein is A-type ATP synthase subunit C.